A 342-amino-acid polypeptide reads, in one-letter code: MMRYEDVSQLSLMNLTYEEQRLENIRKNEDLLRSLGLGAPSEATTLATPSNLKTAGNQRRYNDTLVGKSNTGRNRSDSPRKRPTKDREDLNLVPQSAIKRRQSVRLGGKEKPNYTREQVTFNSDRDTPNTPSRQIKSTHSHPGSEEEDIRQVKTRTLGVRVHNPKTFGHIPGIGVGKWWATRMEASADAVHAPTVAGISGNAHEGAWSVALSGGYPDDIDLGYAFTYTGCGGRDLKGTKQNPKNLRTAPQTSHQSFDNPLNAALKRSAETRNPVRVIRGFKLQSKYAPPTGYRYDGLYIVEKAWMAKGLTNGLMVCRYAFKRMDDQGPLPQKDLDHDDDNKA.

Positions 41 to 149 are disordered; the sequence is SEATTLATPS…SHPGSEEEDI (109 aa). Positions 42 to 59 are enriched in polar residues; that stretch reads EATTLATPSNLKTAGNQR. Over residues 74–90 the composition is skewed to basic and acidic residues; that stretch reads NRSDSPRKRPTKDREDL. The segment covering 115–141 has biased composition (polar residues); that stretch reads TREQVTFNSDRDTPNTPSRQIKSTHSH. In terms of domain architecture, YDG spans 168–322; it reads GHIPGIGVGK…LMVCRYAFKR (155 aa). D218 is a binding site for DNA. Residues 236 to 257 are disordered; the sequence is KGTKQNPKNLRTAPQTSHQSFD. The segment covering 238–257 has biased composition (polar residues); it reads TKQNPKNLRTAPQTSHQSFD.

Its subcellular location is the nucleus. In terms of biological role, involved in the maintenance of DNA methylation. Binds hemimethylated DNA. In Cryptococcus neoformans var. grubii serotype A (strain H99 / ATCC 208821 / CBS 10515 / FGSC 9487) (Filobasidiella neoformans var. grubii), this protein is UHRF1-like protein.